The primary structure comprises 227 residues: KH domain-containing protein MJ0443 (227 aa).

KH domains are found at residues 14–77 and 106–163; these read KSIE…RDIV and DYAS…KEAV.

The sequence is that of KH domain-containing protein MJ0443 from Methanocaldococcus jannaschii (strain ATCC 43067 / DSM 2661 / JAL-1 / JCM 10045 / NBRC 100440) (Methanococcus jannaschii).